Here is a 172-residue protein sequence, read N- to C-terminus: Peptide methionine sulfoxide reductase MsrA 2 (172 aa).

Residue Cys-12 is part of the active site.

It belongs to the MsrA Met sulfoxide reductase family.

The enzyme catalyses L-methionyl-[protein] + [thioredoxin]-disulfide + H2O = L-methionyl-(S)-S-oxide-[protein] + [thioredoxin]-dithiol. It carries out the reaction [thioredoxin]-disulfide + L-methionine + H2O = L-methionine (S)-S-oxide + [thioredoxin]-dithiol. Has an important function as a repair enzyme for proteins that have been inactivated by oxidation. Catalyzes the reversible oxidation-reduction of methionine sulfoxide in proteins to methionine. The sequence is that of Peptide methionine sulfoxide reductase MsrA 2 (msrA2) from Lactococcus lactis subsp. lactis (strain IL1403) (Streptococcus lactis).